The following is a 1141-amino-acid chain: Probable ubiquitin carboxyl-terminal hydrolase 2 (1141 aa).

Phosphothreonine is present on Thr-112. At Ser-113 the chain carries Phosphoserine. Thr-115 is modified (phosphothreonine). The region spanning 614-1124 (IGLENTGNLC…NPYMLTYIRK (511 aa)) is the USP domain. Catalysis depends on Cys-623, which acts as the Nucleophile. Residue Thr-721 is modified to Phosphothreonine. At Ser-722 the chain carries Phosphoserine. Residues 748 to 770 (EEQAQGLEQEQGQDEAKSPAEQS) are disordered. Catalysis depends on His-1076, which acts as the Proton acceptor.

It belongs to the peptidase C19 family.

It catalyses the reaction Thiol-dependent hydrolysis of ester, thioester, amide, peptide and isopeptide bonds formed by the C-terminal Gly of ubiquitin (a 76-residue protein attached to proteins as an intracellular targeting signal).. This chain is Probable ubiquitin carboxyl-terminal hydrolase 2 (ubp2), found in Schizosaccharomyces pombe (strain 972 / ATCC 24843) (Fission yeast).